A 46-amino-acid polypeptide reads, in one-letter code: uncharacterized protein (46 aa).

It is found in the mitochondrion. This is an uncharacterized protein from Saccharomyces cerevisiae (strain ATCC 204508 / S288c) (Baker's yeast).